Here is a 100-residue protein sequence, read N- to C-terminus: Urease subunit gamma (100 aa).

This sequence belongs to the urease gamma subunit family. As to quaternary structure, heterotrimer of UreA (gamma), UreB (beta) and UreC (alpha) subunits. Three heterotrimers associate to form the active enzyme.

The protein localises to the cytoplasm. It catalyses the reaction urea + 2 H2O + H(+) = hydrogencarbonate + 2 NH4(+). The protein operates within nitrogen metabolism; urea degradation; CO(2) and NH(3) from urea (urease route): step 1/1. In Roseobacter denitrificans (strain ATCC 33942 / OCh 114) (Erythrobacter sp. (strain OCh 114)), this protein is Urease subunit gamma.